The sequence spans 615 residues: Prickle planar cell polarity protein 3 (615 aa).

The segment covering 1–12 (MFARGSRRRRSG) has biased composition (basic residues). The interval 1-26 (MFARGSRRRRSGRAPPEAEDPDRGQP) is disordered. Residues 74–182 (SDFQRHSISD…IVRIFPVTIT (109 aa)) form the PET domain. 3 consecutive LIM zinc-binding domains span residues 184 to 249 (AICE…CLRP), 250 to 309 (RCQA…RHAE), and 310 to 373 (YCDG…SEPT). Disordered stretches follow at residues 396-567 (ASFS…LGER) and 587-615 (TFNS…CIVA). The segment covering 405–415 (SETTTKGTSTE) has biased composition (polar residues). Ser475 and Ser491 each carry phosphoserine. The segment covering 508-531 (PSRRRHHHHNHHHHHNRHPSRRRH) has biased composition (basic residues). Positions 537–555 (GSGSDSESCSSSPSSSSSE) are enriched in low complexity. Basic and acidic residues predominate over residues 606-615 (QARDKNCIVA).

This sequence belongs to the prickle / espinas / testin family. In terms of assembly, interacts with VANGL2 via its C-terminus. The VANGL2-dependent membrane recruitment of PRICKLE3 is a prerequisite for its polarization. Interacts with WTIP. WTIP is involved in the recruitment of PRICKLE3 to the basal body. Interacts with MT-ATP8, a component of the mitochondrial complex V. Widely expressed.

The protein localises to the cytoplasm. The protein resides in the cell membrane. It is found in the mitochondrion. Functionally, involved in the planar cell polarity (PCP) pathway that is essential for the polarization of epithelial cells during morphogenetic processes, including gastrulation and neurulation. PCP is maintained by two molecular modules, the global and the core modules, PRICKLE3 being part of the core module. Distinct complexes of the core module segregate to opposite sides of the cell, where they interact with the opposite complex in the neighboring cell at or near the adherents junctions. Involved in the organization of the basal body. Involved in cilia growth and positioning. Required for proper assembly, stability, and function of mitochondrial membrane ATP synthase (mitochondrial complex V). The chain is Prickle planar cell polarity protein 3 from Homo sapiens (Human).